Here is a 525-residue protein sequence, read N- to C-terminus: Cytochrome P450 monooxygenase bsc2 (525 aa).

A helical membrane pass occupies residues 12–32 (SLFILWLTTLLVSVLATAAYI). 2 N-linked (GlcNAc...) asparagine glycosylation sites follow: N86 and N317. C456 contributes to the heme binding site.

The protein belongs to the cytochrome P450 family. Requires heme as cofactor.

It is found in the membrane. It functions in the pathway mycotoxin biosynthesis. In terms of biological role, cytochrome P450 monooxygenase; part of the gene cluster that mediates the biosynthesis of the diterpene glucoside brassicicene C. In the first step of the brassicicene C biosynthesis, the bifunctional diterpene synthase bsc8 that possesses both prenyl transferase and terpene cyclase activity, converts isopentenyl diphosphate and dimethylallyl diphosphate into geranylgeranyl diphosphate (GGDP) that is further converted into fusicocca-2,10(14)-diene, the first precursor for brassicicene C. Fusicocca-2,10(14)-diene is then substrate of cytochrome P450 monooxygenase bsc1 for hydroxylation at the C-8 position. Oxidation at C-16 position to aldehyde is then catalyzed by the cytochrome P450 monooyxygenase bsc7, yielding fusicocca-2,10(14)-diene-8-beta,16-diol. Follows the isomerization of the double bond and reduction of aldehyde to alcohol catalyzed by the short-chain dehydrogenase/reductase bsc3 to yield the diol compound fusicocca-1,10(14)-diene-8 beta,16-diol. The next step is the oxidation at the C-3 position of fusicocca-2,10(14)-diene-8-beta,16-diol catalyzed by the alpha-ketoglutarate dependent dioxygenase bsc9, to produce a triol compound. Methylation of the hydroxy group at position 16 is performed by the methyltransferase bsc6. 16-O-methylation is followed by oxidation at the C-13 position to ketone and an alkyl shift of the methyl group leads to brassicicene C. Although the probable acetyltransferase bsc4 is included in the gene cluster, no acetylation reactions are necessary for brassicicene C biosynthesis. However, the fact that brassicicene E, which is a structurally related compound having an acetoxy group at position 12, was previously isolated from another strain of A.brassicicola suggests that the ATCC 96836 strain might also produce a small amount of brassicicene E. In Alternaria brassicicola (Dark leaf spot agent), this protein is Cytochrome P450 monooxygenase bsc2.